The sequence spans 87 residues: Retinal rod rhodopsin-sensitive cGMP 3',5'-cyclic phosphodiesterase subunit gamma (87 aa).

Position 1 is an N-acetylmethionine (Met1). Residues 16–54 (VVGGPVTPRKGPPKFKQRQTRQFKSKPPKKGVQGFGDDI) form a disordered region. Residues 26-44 (GPPKFKQRQTRQFKSKPPK) show a composition bias toward basic residues.

Belongs to the rod/cone cGMP-PDE gamma subunit family. As to quaternary structure, oligomer composed of two catalytic chains (alpha and beta), an inhibitory chain (gamma) and the delta chain.

It catalyses the reaction 3',5'-cyclic GMP + H2O = GMP + H(+). Its function is as follows. Participates in processes of transmission and amplification of the visual signal. cGMP-PDEs are the effector molecules in G-protein-mediated phototransduction in vertebrate rods and cones. This is Retinal rod rhodopsin-sensitive cGMP 3',5'-cyclic phosphodiesterase subunit gamma (PDE6G) from Cavia porcellus (Guinea pig).